The primary structure comprises 95 residues: Aspartyl/glutamyl-tRNA(Asn/Gln) amidotransferase subunit C (95 aa).

This sequence belongs to the GatC family. As to quaternary structure, heterotrimer of A, B and C subunits.

The catalysed reaction is L-glutamyl-tRNA(Gln) + L-glutamine + ATP + H2O = L-glutaminyl-tRNA(Gln) + L-glutamate + ADP + phosphate + H(+). The enzyme catalyses L-aspartyl-tRNA(Asn) + L-glutamine + ATP + H2O = L-asparaginyl-tRNA(Asn) + L-glutamate + ADP + phosphate + 2 H(+). In terms of biological role, allows the formation of correctly charged Asn-tRNA(Asn) or Gln-tRNA(Gln) through the transamidation of misacylated Asp-tRNA(Asn) or Glu-tRNA(Gln) in organisms which lack either or both of asparaginyl-tRNA or glutaminyl-tRNA synthetases. The reaction takes place in the presence of glutamine and ATP through an activated phospho-Asp-tRNA(Asn) or phospho-Glu-tRNA(Gln). The protein is Aspartyl/glutamyl-tRNA(Asn/Gln) amidotransferase subunit C of Clostridium botulinum (strain ATCC 19397 / Type A).